We begin with the raw amino-acid sequence, 59 residues long: Large ribosomal subunit protein uL30 (59 aa).

The protein belongs to the universal ribosomal protein uL30 family. As to quaternary structure, part of the 50S ribosomal subunit.

This chain is Large ribosomal subunit protein uL30, found in Actinobacillus pleuropneumoniae serotype 7 (strain AP76).